Here is a 608-residue protein sequence, read N- to C-terminus: Fatty acid amide hydrolase (608 aa).

Catalysis depends on charge relay system residues lysine 206 and serine 282. 303–306 lines the substrate pocket; sequence GGGS. Residue serine 306 is the Acyl-ester intermediate of the active site.

The protein belongs to the amidase family. Forms homodimers.

Its subcellular location is the endoplasmic reticulum membrane. It localises to the cell membrane. It carries out the reaction N-(9Z,12Z-octadecadienoyl)-ethanolamine + H2O = ethanolamine + (9Z,12Z)-octadecadienoate. It catalyses the reaction N-hexadecanoylethanolamine + H2O = ethanolamine + hexadecanoate. The catalysed reaction is N-dodecanoylethanolamine + H2O = dodecanoate + ethanolamine. With respect to regulation, inhibited by methyl arachidonyl fluorophosphonate (MAFP). Its function is as follows. Catalyzes the hydrolysis of bioactive endogenous fatty acid amides to their corresponding acids. The hydrolysis of endogenous amidated lipids terminates their participation as lipid mediators in various signaling systems. Converts a wide range of N-acylethanolamines (NAEs) to their corresponding free fatty acids and ethanolamine. The polypeptide is Fatty acid amide hydrolase (Oryza sativa subsp. indica (Rice)).